Consider the following 241-residue polypeptide: 3-oxoacyl-[acyl-carrier-protein] reductase FabG (241 aa).

NADP(+) contacts are provided by residues Gly13–Ser16, Ser38, Glu57–Val58, and Asn83. Substrate is bound at residue Ser135. Tyr148 acts as the Proton acceptor in catalysis. Residues Tyr148–Lys152 and Ile181 contribute to the NADP(+) site.

Belongs to the short-chain dehydrogenases/reductases (SDR) family. In terms of assembly, homotetramer.

It catalyses the reaction a (3R)-hydroxyacyl-[ACP] + NADP(+) = a 3-oxoacyl-[ACP] + NADPH + H(+). It participates in lipid metabolism; fatty acid biosynthesis. Functionally, catalyzes the NADPH-dependent reduction of beta-ketoacyl-ACP substrates to beta-hydroxyacyl-ACP products, the first reductive step in the elongation cycle of fatty acid biosynthesis. The chain is 3-oxoacyl-[acyl-carrier-protein] reductase FabG (fabG) from Rickettsia prowazekii (strain Madrid E).